A 273-amino-acid polypeptide reads, in one-letter code: Zinc finger protein 80 (273 aa).

2 C2H2-type zinc fingers span residues 49-71 (YKCK…HQIH) and 77-99 (YECQ…MRIH). The segment at 105–127 (CKCVECGKVFNRRSHLLCYRQIH) adopts a C2H2-type 3; atypical zinc-finger fold. C2H2-type zinc fingers lie at residues 133 to 155 (YECS…RMTH), 161 to 183 (FGCK…MKIH), 189 to 211 (YKCG…SMTH), and 217 to 239 (YECK…TRSH).

The protein belongs to the krueppel C2H2-type zinc-finger protein family.

Its subcellular location is the nucleus. Its function is as follows. May be involved in transcriptional regulation. This Gorilla gorilla gorilla (Western lowland gorilla) protein is Zinc finger protein 80 (ZNF80).